Reading from the N-terminus, the 176-residue chain is Probable DNA-directed RNA polymerase subunit delta (176 aa).

The 68-residue stretch at K14–W81 folds into the HTH HARE-type domain. The tract at residues L114–A176 is disordered. 2 stretches are compositionally biased toward acidic residues: residues E116–E145 and V153–A176.

The protein belongs to the RpoE family. In terms of assembly, RNAP is composed of a core of 2 alpha, a beta and a beta' subunits. The core is associated with a delta subunit and one of several sigma factors.

In terms of biological role, participates in both the initiation and recycling phases of transcription. In the presence of the delta subunit, RNAP displays an increased specificity of transcription, a decreased affinity for nucleic acids, and an increased efficiency of RNA synthesis because of enhanced recycling. The sequence is that of Probable DNA-directed RNA polymerase subunit delta from Staphylococcus aureus (strain bovine RF122 / ET3-1).